A 641-amino-acid chain; its full sequence is 1-deoxy-D-xylulose-5-phosphate synthase (641 aa).

Thiamine diphosphate is bound by residues histidine 79 and 120-122 (GHS). A Mg(2+)-binding site is contributed by aspartate 151. Thiamine diphosphate contacts are provided by residues 152 to 153 (GS), asparagine 180, tyrosine 290, and glutamate 372. Asparagine 180 contacts Mg(2+).

This sequence belongs to the transketolase family. DXPS subfamily. As to quaternary structure, homodimer. Mg(2+) serves as cofactor. Thiamine diphosphate is required as a cofactor.

The catalysed reaction is D-glyceraldehyde 3-phosphate + pyruvate + H(+) = 1-deoxy-D-xylulose 5-phosphate + CO2. It functions in the pathway metabolic intermediate biosynthesis; 1-deoxy-D-xylulose 5-phosphate biosynthesis; 1-deoxy-D-xylulose 5-phosphate from D-glyceraldehyde 3-phosphate and pyruvate: step 1/1. Functionally, catalyzes the acyloin condensation reaction between C atoms 2 and 3 of pyruvate and glyceraldehyde 3-phosphate to yield 1-deoxy-D-xylulose-5-phosphate (DXP). The sequence is that of 1-deoxy-D-xylulose-5-phosphate synthase from Rhodopseudomonas palustris (strain TIE-1).